A 346-amino-acid polypeptide reads, in one-letter code: Phosphoribosylformylglycinamidine cyclo-ligase (346 aa).

This sequence belongs to the AIR synthase family.

The protein resides in the cytoplasm. It carries out the reaction 2-formamido-N(1)-(5-O-phospho-beta-D-ribosyl)acetamidine + ATP = 5-amino-1-(5-phospho-beta-D-ribosyl)imidazole + ADP + phosphate + H(+). Its pathway is purine metabolism; IMP biosynthesis via de novo pathway; 5-amino-1-(5-phospho-D-ribosyl)imidazole from N(2)-formyl-N(1)-(5-phospho-D-ribosyl)glycinamide: step 2/2. The polypeptide is Phosphoribosylformylglycinamidine cyclo-ligase (Bacillus licheniformis (strain ATCC 14580 / DSM 13 / JCM 2505 / CCUG 7422 / NBRC 12200 / NCIMB 9375 / NCTC 10341 / NRRL NRS-1264 / Gibson 46)).